The chain runs to 965 residues: Glycine dehydrogenase (decarboxylating) (965 aa).

Lysine 711 carries the post-translational modification N6-(pyridoxal phosphate)lysine.

Belongs to the GcvP family. As to quaternary structure, the glycine cleavage system is composed of four proteins: P, T, L and H. The cofactor is pyridoxal 5'-phosphate.

The enzyme catalyses N(6)-[(R)-lipoyl]-L-lysyl-[glycine-cleavage complex H protein] + glycine + H(+) = N(6)-[(R)-S(8)-aminomethyldihydrolipoyl]-L-lysyl-[glycine-cleavage complex H protein] + CO2. The glycine cleavage system catalyzes the degradation of glycine. The P protein binds the alpha-amino group of glycine through its pyridoxal phosphate cofactor; CO(2) is released and the remaining methylamine moiety is then transferred to the lipoamide cofactor of the H protein. This chain is Glycine dehydrogenase (decarboxylating), found in Psychrobacter cryohalolentis (strain ATCC BAA-1226 / DSM 17306 / VKM B-2378 / K5).